The chain runs to 545 residues: Glucose-6-phosphate isomerase (545 aa).

Glutamate 351 functions as the Proton donor in the catalytic mechanism. Residues histidine 382 and lysine 510 contribute to the active site.

It belongs to the GPI family.

The protein resides in the cytoplasm. It catalyses the reaction alpha-D-glucose 6-phosphate = beta-D-fructose 6-phosphate. It functions in the pathway carbohydrate biosynthesis; gluconeogenesis. It participates in carbohydrate degradation; glycolysis; D-glyceraldehyde 3-phosphate and glycerone phosphate from D-glucose: step 2/4. Its function is as follows. Catalyzes the reversible isomerization of glucose-6-phosphate to fructose-6-phosphate. In Shewanella sediminis (strain HAW-EB3), this protein is Glucose-6-phosphate isomerase.